The following is a 240-amino-acid chain: tRNA pseudouridine synthase A (240 aa).

Aspartate 52 functions as the Nucleophile in the catalytic mechanism. Tyrosine 110 lines the substrate pocket.

The protein belongs to the tRNA pseudouridine synthase TruA family. Homodimer.

The catalysed reaction is uridine(38/39/40) in tRNA = pseudouridine(38/39/40) in tRNA. Formation of pseudouridine at positions 38, 39 and 40 in the anticodon stem and loop of transfer RNAs. This Solibacter usitatus (strain Ellin6076) protein is tRNA pseudouridine synthase A.